A 208-amino-acid chain; its full sequence is 3-isopropylmalate dehydratase small subunit (208 aa).

This sequence belongs to the LeuD family. LeuD type 1 subfamily. As to quaternary structure, heterodimer of LeuC and LeuD.

The enzyme catalyses (2R,3S)-3-isopropylmalate = (2S)-2-isopropylmalate. It participates in amino-acid biosynthesis; L-leucine biosynthesis; L-leucine from 3-methyl-2-oxobutanoate: step 2/4. Its function is as follows. Catalyzes the isomerization between 2-isopropylmalate and 3-isopropylmalate, via the formation of 2-isopropylmaleate. The chain is 3-isopropylmalate dehydratase small subunit from Granulibacter bethesdensis (strain ATCC BAA-1260 / CGDNIH1).